The primary structure comprises 241 residues: GTP cyclohydrolase III (241 aa).

It belongs to the archaeal-type GTP cyclohydrolase family.

The catalysed reaction is GTP + 3 H2O = 2-amino-5-formylamino-6-(5-phospho-D-ribosylamino)pyrimidin-4(3H)-one + 2 phosphate + 2 H(+). Its function is as follows. Catalyzes the formation of 2-amino-5-formylamino-6-ribofuranosylamino-4(3H)-pyrimidinone ribonucleotide monophosphate and inorganic phosphate from GTP. Also has an independent pyrophosphate phosphohydrolase activity. This Aeropyrum pernix (strain ATCC 700893 / DSM 11879 / JCM 9820 / NBRC 100138 / K1) protein is GTP cyclohydrolase III.